A 327-amino-acid chain; its full sequence is Ribosomal RNA small subunit methyltransferase H (327 aa).

Residues 36–38 (GGH), D55, L89, D103, and Q110 contribute to the S-adenosyl-L-methionine site. Residues 286–327 (GAEPASDTEIEQNARAGSVRLRAAERTAAEPGRAHNPTGGVR) form a disordered region.

Belongs to the methyltransferase superfamily. RsmH family.

The protein resides in the cytoplasm. The catalysed reaction is cytidine(1402) in 16S rRNA + S-adenosyl-L-methionine = N(4)-methylcytidine(1402) in 16S rRNA + S-adenosyl-L-homocysteine + H(+). In terms of biological role, specifically methylates the N4 position of cytidine in position 1402 (C1402) of 16S rRNA. In Parafrankia sp. (strain EAN1pec), this protein is Ribosomal RNA small subunit methyltransferase H.